The primary structure comprises 254 residues: tRNA pseudouridine synthase A (254 aa).

Asp52 serves as the catalytic Nucleophile. Position 111 (Tyr111) interacts with substrate.

It belongs to the tRNA pseudouridine synthase TruA family. In terms of assembly, homodimer.

It carries out the reaction uridine(38/39/40) in tRNA = pseudouridine(38/39/40) in tRNA. Formation of pseudouridine at positions 38, 39 and 40 in the anticodon stem and loop of transfer RNAs. The protein is tRNA pseudouridine synthase A of Methylobacterium nodulans (strain LMG 21967 / CNCM I-2342 / ORS 2060).